A 270-amino-acid chain; its full sequence is Orotidine 5'-phosphate decarboxylase (270 aa).

Substrate contacts are provided by residues aspartate 39, 61-63 (KTH), 93-102 (DRKFADIGNT), tyrosine 221, and arginine 239. The active-site Proton donor is lysine 95.

The protein belongs to the OMP decarboxylase family.

It carries out the reaction orotidine 5'-phosphate + H(+) = UMP + CO2. It functions in the pathway pyrimidine metabolism; UMP biosynthesis via de novo pathway; UMP from orotate: step 2/2. The sequence is that of Orotidine 5'-phosphate decarboxylase (URA3) from Candida dubliniensis (strain CD36 / ATCC MYA-646 / CBS 7987 / NCPF 3949 / NRRL Y-17841) (Yeast).